The primary structure comprises 962 residues: Exportin-T (962 aa).

At Met-1 the chain carries N-acetylmethionine. Lys-634 is modified (N6-acetyllysine).

Found in a complex with XPOT, Ran and tRNA. Probably found in a complex with nucleoporins. Interacts with Ran and tRNA in a GTP-dependent manner.

It localises to the nucleus. The protein resides in the cytoplasm. Mediates the nuclear export of aminoacylated tRNAs. In the nucleus binds to tRNA and to the GTPase Ran in its active GTP-bound form. Docking of this trimeric complex to the nuclear pore complex (NPC) is mediated through binding to nucleoporins. Upon transit of a nuclear export complex into the cytoplasm, disassembling of the complex and hydrolysis of Ran-GTP to Ran-GDP (induced by RANBP1 and RANGAP1, respectively) cause release of the tRNA from the export receptor. XPOT then return to the nuclear compartment and mediate another round of transport. The directionality of nuclear export is thought to be conferred by an asymmetric distribution of the GTP- and GDP-bound forms of Ran between the cytoplasm and nucleus. The polypeptide is Exportin-T (XPOT) (Pongo abelii (Sumatran orangutan)).